A 194-amino-acid chain; its full sequence is Lectin-C (194 aa).

An N-terminal signal peptide occupies residues Met-1–Gly-26. Residues Gln-27–Gly-44 constitute a propeptide, removed in mature form. 3 Chitin-binding type-1 domains span residues Ala-45–Tyr-86, Asn-87–Tyr-127, and Trp-128–Leu-168. Intrachain disulfides connect Cys-48/Cys-63, Cys-57/Cys-69, Cys-62/Cys-76, Cys-80/Cys-84, Cys-89/Cys-104, Cys-98/Cys-110, Cys-103/Cys-117, Cys-121/Cys-125, Cys-130/Cys-145, Cys-139/Cys-151, Cys-144/Cys-158, and Cys-162/Cys-166. Positions Leu-171–Ser-194 are cleaved as a propeptide — removed in mature form.

As to quaternary structure, homodimer. The homodimers are asymmetric; formed in a 'head-to-tail' fashion via hydrophobic interactions between aromatic residues of the carbohydrate-binding sites of each subunit.

N-acetyl-D-glucosamine binding lectin. Almost no hemagglutinating activity towards human erythrocytes. Low mitogenic activity towards human peripheral blood lymphocytes. In Phytolacca americana (American pokeweed), this protein is Lectin-C.